The primary structure comprises 413 residues: Serine hydroxymethyltransferase (413 aa).

(6S)-5,6,7,8-tetrahydrofolate-binding positions include Leu-117 and 121 to 123 (GHL). An N6-(pyridoxal phosphate)lysine modification is found at Lys-226. 349 to 351 (SPF) is a binding site for (6S)-5,6,7,8-tetrahydrofolate.

This sequence belongs to the SHMT family. In terms of assembly, homodimer. The cofactor is pyridoxal 5'-phosphate.

Its subcellular location is the cytoplasm. The enzyme catalyses (6R)-5,10-methylene-5,6,7,8-tetrahydrofolate + glycine + H2O = (6S)-5,6,7,8-tetrahydrofolate + L-serine. It functions in the pathway one-carbon metabolism; tetrahydrofolate interconversion. The protein operates within amino-acid biosynthesis; glycine biosynthesis; glycine from L-serine: step 1/1. Functionally, catalyzes the reversible interconversion of serine and glycine with tetrahydrofolate (THF) serving as the one-carbon carrier. This reaction serves as the major source of one-carbon groups required for the biosynthesis of purines, thymidylate, methionine, and other important biomolecules. Also exhibits THF-independent aldolase activity toward beta-hydroxyamino acids, producing glycine and aldehydes, via a retro-aldol mechanism. This is Serine hydroxymethyltransferase from Listeria monocytogenes serotype 4b (strain F2365).